A 201-amino-acid polypeptide reads, in one-letter code: Probable molybdenum cofactor guanylyltransferase (201 aa).

Residues 6 to 8 (LAG), Lys18, Asp65, and Asp97 contribute to the GTP site. Asp97 lines the Mg(2+) pocket.

It belongs to the MobA family. Requires Mg(2+) as cofactor.

It is found in the cytoplasm. The enzyme catalyses Mo-molybdopterin + GTP + H(+) = Mo-molybdopterin guanine dinucleotide + diphosphate. Its function is as follows. Transfers a GMP moiety from GTP to Mo-molybdopterin (Mo-MPT) cofactor (Moco or molybdenum cofactor) to form Mo-molybdopterin guanine dinucleotide (Mo-MGD) cofactor. The protein is Probable molybdenum cofactor guanylyltransferase of Staphylococcus haemolyticus (strain JCSC1435).